Reading from the N-terminus, the 629-residue chain is Chaperone protein DnaK (629 aa).

Phosphothreonine; by autocatalysis is present on threonine 195. Disordered regions lie at residues glutamate 514–asparagine 533 and leucine 543–glutamate 629. Residues aspartate 555–methionine 590 show a composition bias toward basic and acidic residues. A compositionally biased stretch (low complexity) spans threonine 595–glycine 614. Residues arginine 615–glutamate 629 are compositionally biased toward basic and acidic residues.

The protein belongs to the heat shock protein 70 family.

Acts as a chaperone. The chain is Chaperone protein DnaK from Deinococcus geothermalis (strain DSM 11300 / CIP 105573 / AG-3a).